A 179-amino-acid polypeptide reads, in one-letter code: ATP-dependent protease subunit HslV (179 aa).

Residue threonine 7 is part of the active site. Glycine 162, cysteine 165, and threonine 168 together coordinate Na(+).

This sequence belongs to the peptidase T1B family. HslV subfamily. A double ring-shaped homohexamer of HslV is capped on each side by a ring-shaped HslU homohexamer. The assembly of the HslU/HslV complex is dependent on binding of ATP.

It localises to the cytoplasm. The catalysed reaction is ATP-dependent cleavage of peptide bonds with broad specificity.. Allosterically activated by HslU binding. Functionally, protease subunit of a proteasome-like degradation complex believed to be a general protein degrading machinery. The chain is ATP-dependent protease subunit HslV from Aromatoleum aromaticum (strain DSM 19018 / LMG 30748 / EbN1) (Azoarcus sp. (strain EbN1)).